The chain runs to 250 residues: uncharacterized protein (250 aa).

6 consecutive 4Fe-4S ferredoxin-type domains span residues Lys38–Val67, Lys69–Gly98, Lys124–Arg153, Lys154–Glu183, Arg191–Asp220, and Asp220–Lys249. [4Fe-4S] cluster contacts are provided by Cys47, Cys50, Cys53, Cys57, Cys78, Cys81, Cys84, Cys88, Cys133, Cys136, Cys139, Cys143, Cys163, Cys166, Cys169, Cys173, Cys200, Cys203, Cys206, Cys210, Cys229, Cys232, Cys235, and Cys239.

This is an uncharacterized protein from Methanocaldococcus jannaschii (strain ATCC 43067 / DSM 2661 / JAL-1 / JCM 10045 / NBRC 100440) (Methanococcus jannaschii).